Reading from the N-terminus, the 1252-residue chain is DNA-directed RNA polymerase subunit beta (1252 aa).

Belongs to the RNA polymerase beta chain family. The RNAP catalytic core consists of 2 alpha, 1 beta, 1 beta' and 1 omega subunit. When a sigma factor is associated with the core the holoenzyme is formed, which can initiate transcription.

The enzyme catalyses RNA(n) + a ribonucleoside 5'-triphosphate = RNA(n+1) + diphosphate. Its function is as follows. DNA-dependent RNA polymerase catalyzes the transcription of DNA into RNA using the four ribonucleoside triphosphates as substrates. This chain is DNA-directed RNA polymerase subunit beta, found in Chlamydia abortus (strain DSM 27085 / S26/3) (Chlamydophila abortus).